A 1142-amino-acid polypeptide reads, in one-letter code: Serine/threonine-protein kinase dst2 (1142 aa).

The Protein kinase domain maps to phenylalanine 20–valine 276. Residues isoleucine 26–valine 34 and lysine 49 contribute to the ATP site. Residue aspartate 141 is the Proton acceptor of the active site. The span at leucine 300–aspartate 322 shows a compositional bias: acidic residues. Disordered regions lie at residues leucine 300–glutamate 492, lysine 515–proline 636, glutamate 744–arginine 768, serine 939–threonine 974, and glutamate 1040–aspartate 1142. Residues serine 323–serine 336 show a composition bias toward basic and acidic residues. The segment covering glutamine 355–leucine 365 has biased composition (polar residues). Low complexity predominate over residues glutamine 371 to glutamine 390. A compositionally biased stretch (polar residues) spans proline 391 to asparagine 413. Residues alanine 421 to glycine 452 are compositionally biased toward low complexity. Basic and acidic residues predominate over residues serine 467–threonine 477. Positions lysine 541–serine 554 are enriched in low complexity. 4 stretches are compositionally biased toward basic and acidic residues: residues alanine 555–glutamine 588, lysine 597–threonine 635, glutamate 744–isoleucine 760, and serine 939–lysine 969. Residues glutamine 716 to lysine 1050 are a coiled coil. The span at threonine 1068 to asparagine 1091 shows a compositional bias: low complexity.

This sequence belongs to the protein kinase superfamily. STE Ser/Thr protein kinase family. STE20 subfamily. The cofactor is Mg(2+).

It carries out the reaction L-seryl-[protein] + ATP = O-phospho-L-seryl-[protein] + ADP + H(+). The enzyme catalyses L-threonyl-[protein] + ATP = O-phospho-L-threonyl-[protein] + ADP + H(+). The polypeptide is Serine/threonine-protein kinase dst2 (Dictyostelium discoideum (Social amoeba)).